The following is a 500-amino-acid chain: L-arabinose isomerase (500 aa).

Residues Glu306, Glu333, His349, and His448 each coordinate Mn(2+).

This sequence belongs to the arabinose isomerase family. The cofactor is Mn(2+).

It catalyses the reaction beta-L-arabinopyranose = L-ribulose. It functions in the pathway carbohydrate degradation; L-arabinose degradation via L-ribulose; D-xylulose 5-phosphate from L-arabinose (bacterial route): step 1/3. In terms of biological role, catalyzes the conversion of L-arabinose to L-ribulose. The sequence is that of L-arabinose isomerase from Cellvibrio japonicus (strain Ueda107) (Pseudomonas fluorescens subsp. cellulosa).